Reading from the N-terminus, the 333-residue chain is Ribosomal protein L11 methyltransferase (333 aa).

The S-adenosyl-L-methionine site is built by Thr-181, Gly-202, Asp-224, and Asn-268.

Belongs to the methyltransferase superfamily. PrmA family.

It localises to the cytoplasm. The enzyme catalyses L-lysyl-[protein] + 3 S-adenosyl-L-methionine = N(6),N(6),N(6)-trimethyl-L-lysyl-[protein] + 3 S-adenosyl-L-homocysteine + 3 H(+). Methylates ribosomal protein L11. The chain is Ribosomal protein L11 methyltransferase from Helicobacter pylori (strain ATCC 700392 / 26695) (Campylobacter pylori).